The chain runs to 320 residues: Methionyl-tRNA formyltransferase (320 aa).

Position 114–117 (114–117 (SLLP)) interacts with (6S)-5,6,7,8-tetrahydrofolate.

Belongs to the Fmt family.

It catalyses the reaction L-methionyl-tRNA(fMet) + (6R)-10-formyltetrahydrofolate = N-formyl-L-methionyl-tRNA(fMet) + (6S)-5,6,7,8-tetrahydrofolate + H(+). Attaches a formyl group to the free amino group of methionyl-tRNA(fMet). The formyl group appears to play a dual role in the initiator identity of N-formylmethionyl-tRNA by promoting its recognition by IF2 and preventing the misappropriation of this tRNA by the elongation apparatus. This is Methionyl-tRNA formyltransferase from Acinetobacter baumannii (strain AB307-0294).